The chain runs to 354 residues: Probable mannitol dehydrogenase 1 (354 aa).

Residues C43, H65, C96, C99, C102, C110, and C158 each contribute to the Zn(2+) site.

The protein belongs to the zinc-containing alcohol dehydrogenase family. It depends on Zn(2+) as a cofactor.

The enzyme catalyses D-mannitol + NAD(+) = D-mannose + NADH + H(+). Oxidizes mannitol to mannose. Provides the initial step by which translocated mannitol is committed to central metabolism and, by regulating mannitol pool size, is important in regulating salt tolerance at the cellular level. This Stylosanthes humilis (Townsville stylo) protein is Probable mannitol dehydrogenase 1 (CAD1).